A 410-amino-acid chain; its full sequence is Lissencephaly-1 homolog A (410 aa).

One can recognise a LisH domain in the interval 7-39 (QRDELNRAIADYLRSNGYEEAYSVFKKEAELDM). The stretch at 56-83 (TSVIRLQKKVMELESKLNEAKEEINIGG) forms a coiled coil. WD repeat units follow at residues 106–145 (GHRS…FERT), 148–187 (GHTD…CIRT), 190–229 (GHDH…CVKT), 232–271 (GHRE…CKAE), 274–333 (EHEH…CLMT), 336–375 (GHDN…CTKT), and 378–410 (AHEH…WECR).

This sequence belongs to the WD repeat LIS1/nudF family. In terms of assembly, can self-associate. Component of the cytosolic PAF-AH (I) heterotetrameric enzyme, which is composed of PAFAH1B1 (beta), PAFAH1B2 (alpha2) and PAFAH1B3 (alpha1) subunits. The catalytic activity of the enzyme resides in the alpha1 (PAFAH1B3) and alpha2 (PAFAH1B2) subunits, whereas the beta subunit (PAFAH1B1) has regulatory activity. Trimer formation is not essential for the catalytic activity. Interacts with dynein, dynactin, nde1 and ndel1.

The protein resides in the cytoplasm. It is found in the cytoskeleton. The protein localises to the microtubule organizing center. Its subcellular location is the centrosome. In terms of biological role, regulatory subunit (beta subunit) of the cytosolic type I platelet-activating factor (PAF) acetylhydrolase (PAF-AH (I)), an enzyme that catalyzes the hydrolyze of the acetyl group at the sn-2 position of PAF and its analogs and participates in PAF inactivation. Regulates the PAF-AH (I) activity in a catalytic dimer composition-dependent manner. Positively regulates the activity of the minus-end directed microtubule motor protein dynein. May enhance dynein-mediated microtubule sliding by targeting dynein to the microtubule plus end. Required for several dynein- and microtubule-dependent processes such as the maintenance of Golgi integrity, the peripheral transport of microtubule fragments and the coupling of the nucleus and centrosome. May be required for proliferation of neuronal precursors and neuronal migration. This is Lissencephaly-1 homolog A (pafah1b1a) from Danio rerio (Zebrafish).